We begin with the raw amino-acid sequence, 607 residues long: Matrix metalloproteinase-16 (607 aa).

Residues 1–31 form the signal peptide; sequence MILLTFSTGRRLDFVHHSGVFFLQTLLWILC. The propeptide occupies 32–119; sequence ATVCGTEQYF…SSKFHIRRKR (88 aa). Asn-83 carries an N-linked (GlcNAc...) asparagine glycan. The Cysteine switch signature appears at 99 to 106; it reads PRCGVPDQ. Cys-101 is a binding site for Zn(2+). Topologically, residues 120-564 are extracellular; sequence YALTGQKWQH…LDNTASTVKA (445 aa). Ca(2+) is bound at residue Asp-183. Residues His-193 and Asp-195 each coordinate Zn(2+). Positions 200, 201, 203, and 205 each coordinate Ca(2+). His-208 contacts Zn(2+). Ca(2+)-binding residues include Gly-215, Gly-217, and Asp-219. A Zn(2+)-binding site is contributed by His-221. 2 residues coordinate Ca(2+): Asp-223 and Glu-226. His-246 provides a ligand contact to Zn(2+). Glu-247 is a catalytic residue. Zn(2+) contacts are provided by His-250 and His-256. Positions 281–340 are disordered; the sequence is DDLQGIQKIYGPPDKIPPPTRPLPTVPPHRSIPPADPRKNDRPKPPRPPTGRPSYPGAKP. Over residues 294–315 the composition is skewed to pro residues; it reads DKIPPPTRPLPTVPPHRSIPPA. Hemopexin repeat units lie at residues 340–388, 389–434, 436–484, and 485–532; these read PNIC…WRGL, PPSI…GSGI, PHGI…KGIP, and ESPQ…FMGC. Residues Cys-343 and Cys-532 are joined by a disulfide bond. Residues 565–585 traverse the membrane as a helical segment; it reads IAIVIPCILALCLLVLVYTVF. Over 586–607 the chain is Cytoplasmic; it reads QFKRKGTPRHILYCKRSMQEWV.

It belongs to the peptidase M10A family. Interacts with CSPG4 through CSPG4 chondroitin sulfate glycosaminoglycan. The cofactor is Zn(2+). Requires Ca(2+) as cofactor. In terms of processing, the precursor is cleaved by a furin endopeptidase. Expressed in heart, brain, placenta, ovary and small intestine. Isoform Short is found in the ovary.

It is found in the cell membrane. The protein localises to the secreted. Its subcellular location is the extracellular space. It localises to the extracellular matrix. The protein resides in the cell surface. TIMP-2 shows little inhibitory activity compared to TIMP-1. TIMP-1 seems to have less binding affinity than TIMP-2 for the short isoform. In terms of biological role, endopeptidase that degrades various components of the extracellular matrix, such as collagen type III and fibronectin. Activates progelatinase A. Involved in the matrix remodeling of blood vessels. Isoform short cleaves fibronectin and also collagen type III, but at lower rate. It has no effect on type I, II, IV and V collagen. However, upon interaction with CSPG4, it may be involved in degradation and invasion of type I collagen by melanoma cells. This Homo sapiens (Human) protein is Matrix metalloproteinase-16.